Here is a 776-residue protein sequence, read N- to C-terminus: MASLIYRQLLANSYAVDLSDEIQSVGSEKNQRVTVNPGPFAQTGYAPVNWGPGEVNDPTVVQPVLDGPYQPASFDLPVGNWMLLAPTGPGVVVEGTDNSGRWLSVILIEPGVTSETRTYTMFGSSKQVVVSNVSDTKWKFVEMMKTAVDGDYRNGGTLLSDTKLYGMMKYGERLFIYEGETPNVTTKGYIVTNYASVEVRPYSDFYIISRSQESACTEYINNGLPPIQNTRNVVPVAISSRSIKQREEQANEDIIVSKTSLWKEMQYNRDIIIRFKFDNSIIKSGGLGYKWAEISFKAANYQYNYIRDGEEVTAHTTCSVNGVNDFSFNGGSLPTDFAISRYEVIKENSYVYIDYWDDSQAFRNMVYVRSLAANLNDVMCSAGDYSFKLPAGQWPVMKGGAVTLHTAGVTLSTQFTDFVSLNSLRFRFRLAVEEPSFTITRTRVSKLYGLPAANPNGGREYYEVAGRFSLISLVPSNDDYQTPIMNSVTVRQDLERRLNELREEFNNLSQEIAVSQLIDLAMLPLDMFSMFSGIEGTVNAAKSMATNVMRKFKSSKLASSVSMLTNSLSDAASSVSRSSSIRSIGSTASAWANISEQTQDAVSEVATISSQVSQISGKLRLKEITTQTEGMNFDDISAAVLKAKIDRSIQVDQNAFPDVIAEASEKFIRNRAYRVIDGDEAFEAGTDGRFFAYKVETLEEMPFNIGKFADLVTNSPVISAIIDFKTLKNLNDNYGITREQAFNLLRSNPKVLRGFIDQNDPIIKNRIEQLIMQCRL.

The segment at leucine 65 to leucine 224 is spike head. A spike body and stalk (antigen domain) region spans residues glutamate 248–aspartate 479. The DGE motif; interaction with ITGA2/ITGB1 heterodimer signature appears at aspartate 308–glutamate 310. Residues cysteine 318 and cysteine 380 are joined by a disulfide bond. Positions leucine 389–valine 409 are hydrophobic; possible role in virus entry into host cell. The YGL motif; interaction with ITGA4 signature appears at tyrosine 448–leucine 450. Residues isoleucine 484–isoleucine 518 are a coiled coil. A spike foot region spans residues glutamine 510–leucine 776. The KID motif; interaction with HSPA8 signature appears at lysine 644–aspartate 646.

This sequence belongs to the rotavirus VP4 family. As to quaternary structure, homotrimer. VP4 adopts a dimeric appearance above the capsid surface, while forming a trimeric base anchored inside the capsid layer. Only hints of the third molecule are observed above the capsid surface. It probably performs a series of molecular rearrangements during viral entry. Prior to trypsin cleavage, it is flexible. The priming trypsin cleavage triggers its rearrangement into rigid spikes with approximate two-fold symmetry of their protruding parts. After an unknown second triggering event, cleaved VP4 may undergo another rearrangement, in which two VP5* subunits fold back on themselves and join a third subunit to form a tightly associated trimer, shaped like a folded umbrella. Interacts with VP6. Interacts with VP7. Homotrimer. The trimer is coiled-coil stabilized by its C-terminus, however, its N-terminus, known as antigen domain or 'body', seems to be flexible allowing it to self-associate either as a dimer or a trimer. Proteolytic cleavage by trypsin results in activation of VP4 functions and greatly increases infectivity. The penetration into the host cell is dependent on trypsin treatment of VP4. It produces two peptides, VP5* and VP8* that remain associated with the virion. Cleavage of VP4 by trypsin probably occurs in vivo in the lumen of the intestine prior to infection of enterocytes. Trypsin seems to be incorporated into the three-layered viral particles but remains inactive as long as the viral outer capsid is intact and would only be activated upon the solubilization of the latter.

Its subcellular location is the virion. It is found in the host rough endoplasmic reticulum. The protein resides in the host cell membrane. It localises to the host cytoplasm. The protein localises to the host cytoskeleton. Its subcellular location is the host endoplasmic reticulum-Golgi intermediate compartment. In terms of biological role, spike-forming protein that mediates virion attachment to the host epithelial cell receptors and plays a major role in cell penetration, determination of host range restriction and virulence. Rotavirus attachment and entry into the host cell probably involves multiple sequential contacts between the outer capsid proteins VP4 and VP7, and the cell receptors. It is subsequently lost, together with VP7, following virus entry into the host cell. Following entry into the host cell, low intracellular or intravesicular Ca(2+) concentration probably causes the calcium-stabilized VP7 trimers to dissociate from the virion. This step is probably necessary for the membrane-disrupting entry step and the release of VP4, which is locked onto the virion by VP7. During the virus exit from the host cell, VP4 seems to be required to target the newly formed virions to the host cell lipid rafts. Forms the spike 'foot' and 'body' and acts as a membrane permeabilization protein that mediates release of viral particles from endosomal compartments into the cytoplasm. During entry, the part of VP5* that protrudes from the virus folds back on itself and reorganizes from a local dimer to a trimer. This reorganization may be linked to membrane penetration by exposing VP5* hydrophobic region. In integrin-dependent strains, VP5* targets the integrin heterodimer ITGA2/ITGB1 for cell attachment. Functionally, forms the head of the spikes and mediates the recognition of specific host cell surface glycans. It is the viral hemagglutinin and an important target of neutralizing antibodies. In sialic acid-dependent strains, VP8* binds to host cell sialic acid, most probably a ganglioside, providing the initial contact. In some other strains, VP8* mediates the attachment to histo-blood group antigens (HBGAs) for viral entry. The sequence is that of Outer capsid protein VP4 from Rotavirus A (isolate RVA/Cow/Thailand/61A/1988/G10P7[5]) (RV-A).